The primary structure comprises 194 residues: Large ribosomal subunit protein bL9 (194 aa).

Low complexity predominate over residues 166 to 184 (AENQAQADEQAGELAAAAA). Positions 166 to 194 (AENQAQADEQAGELAAAAAERGDMGGDEE) are disordered. A compositionally biased stretch (basic and acidic residues) spans 185–194 (ERGDMGGDEE).

Belongs to the bacterial ribosomal protein bL9 family.

In terms of biological role, binds to the 23S rRNA. In Hyphomonas neptunium (strain ATCC 15444), this protein is Large ribosomal subunit protein bL9.